Consider the following 290-residue polypeptide: MTTHYLAFPQFDPVIFSLGPVSLHWYGLMYLVGFVFAMWLAVRRANRPGSGWPKEEVENLLYAGFLGVFLGGRIGYVLFYNLPLFLDNPLYLFKVWDGGMSFHGGLIGVIVVMLWFAHRTRRHFFQVADFVAPMVPFGLGAGRLGNFINGELWGRVTTDTPWAMLFPCSRQEDIALLPANPQWQALFERYGVLPRHPSQLYEMLLEGVVLFIILNLFIRKPRPIGSVSGLFLICYGAFRILVEFFRQPDAQLGLFSGVISMGQILSLPMILAGVIMMAWAYRRHPQQHLS.

A run of 7 helical transmembrane segments spans residues 21 to 41, 60 to 80, 98 to 118, 124 to 144, 198 to 218, 224 to 244, and 258 to 278; these read VSLH…MWLA, LLYA…VLFY, GGMS…WFAH, FFQV…AGRL, SQLY…NLFI, IGSV…LVEF, and VISM…IMMA. Arg143 is a binding site for a 1,2-diacyl-sn-glycero-3-phospho-(1'-sn-glycerol).

Belongs to the Lgt family.

It is found in the cell inner membrane. It carries out the reaction L-cysteinyl-[prolipoprotein] + a 1,2-diacyl-sn-glycero-3-phospho-(1'-sn-glycerol) = an S-1,2-diacyl-sn-glyceryl-L-cysteinyl-[prolipoprotein] + sn-glycerol 1-phosphate + H(+). Its pathway is protein modification; lipoprotein biosynthesis (diacylglyceryl transfer). Its function is as follows. Catalyzes the transfer of the diacylglyceryl group from phosphatidylglycerol to the sulfhydryl group of the N-terminal cysteine of a prolipoprotein, the first step in the formation of mature lipoproteins. The chain is Phosphatidylglycerol--prolipoprotein diacylglyceryl transferase from Sodalis glossinidius (strain morsitans).